The sequence spans 478 residues: PRAME family member 4 (478 aa).

The stretch at 99-126 is one LRR 1; degenerate repeat; that stretch reads RWKLQVLDLQDVCENFWMVWSEAMAHGC. One copy of the LRR 2; degenerate repeat lies at 181–205; the sequence is HLCCKKLKILGMPFRNIRSILKMVN. The LRR 3; degenerate repeat unit spans residues 206–232; it reads LDCIQEVEVNCKWVLPILTQFTPYLGH. Residues 233 to 268 form an LRR 4; degenerate repeat; the sequence is MRNLQKLILSHMDVSRYVSPEQKKEIVTQFTTQFLK. 5 LRR repeats span residues 269 to 294, 295 to 326, 327 to 347, 351 to 378, and 379 to 403; these read LRCL…LSCL, KTSL…SQLK, TLDL…QILL, AATL…ALSR, and CFEL…LLSH.

The protein belongs to the PRAME family.

The sequence is that of PRAME family member 4 from Homo sapiens (Human).